A 358-amino-acid chain; its full sequence is Alanine racemase (358 aa).

Residue K34 is the Proton acceptor; specific for D-alanine of the active site. The residue at position 34 (K34) is an N6-(pyridoxal phosphate)lysine. Residue R129 participates in substrate binding. Catalysis depends on Y254, which acts as the Proton acceptor; specific for L-alanine. M302 contributes to the substrate binding site.

Belongs to the alanine racemase family. Requires pyridoxal 5'-phosphate as cofactor.

The enzyme catalyses L-alanine = D-alanine. Its pathway is amino-acid biosynthesis; D-alanine biosynthesis; D-alanine from L-alanine: step 1/1. In terms of biological role, catalyzes the interconversion of L-alanine and D-alanine. May also act on other amino acids. The sequence is that of Alanine racemase (alr) from Vibrio parahaemolyticus serotype O3:K6 (strain RIMD 2210633).